A 277-amino-acid polypeptide reads, in one-letter code: Release factor glutamine methyltransferase (277 aa).

Residues 120–124, aspartate 143, tryptophan 171, and asparagine 186 contribute to the S-adenosyl-L-methionine site; that span reads GTGSG. 186–189 is a substrate binding site; it reads NPPY.

It belongs to the protein N5-glutamine methyltransferase family. PrmC subfamily.

It catalyses the reaction L-glutaminyl-[peptide chain release factor] + S-adenosyl-L-methionine = N(5)-methyl-L-glutaminyl-[peptide chain release factor] + S-adenosyl-L-homocysteine + H(+). Methylates the class 1 translation termination release factors RF1/PrfA and RF2/PrfB on the glutamine residue of the universally conserved GGQ motif. This Coxiella burnetii (strain RSA 493 / Nine Mile phase I) protein is Release factor glutamine methyltransferase.